A 440-amino-acid polypeptide reads, in one-letter code: Alpha-methylserine aldolase (440 aa).

At Lys-255 the chain carries N6-(pyridoxal phosphate)lysine.

The protein belongs to the SHMT family. Alpha-methylserine aldolase subfamily. In terms of assembly, homodimer. Pyridoxal 5'-phosphate serves as cofactor.

The enzyme catalyses 2-methyl-L-serine = formaldehyde + L-alanine. It carries out the reaction 2-ethyl-L-serine = (2S)-2-aminobutanoate + formaldehyde. Its activity is regulated as follows. In the alpha-methyl-L-serine synthesis reaction, activity is inhibited by an excess amount of formaldehyde (at a concentration greater than 4 mM). Formaldehyde release activity is reduced by the sulfhydryl reagent N-ethylmaleimide, iodoacetate amide and iodoacetic acid, but not by dithiothreitol and 2-mercaptoethanol. Activity is enhanced by 1 mM of manganese chloride. Catalyzes the reversible interconversion of alpha-methyl-L-serine to L-alanine and formaldehyde. Can also catalyze the synthesis of alpha-ethyl-L-serine from L-2-aminobutyric acid and formaldehyde. Also shows low alanine racemase activity. Cannot use alpha-methyl-D-serine, L-serine, D-serine, (S)-2-amino-1-propanol, (R)-2-amino-1-propanol, (S)-alpha-hydroxymethyltyrosine, (R)-alpha-hydroxymethyltyrosine, alpha-iso-butyl-DL-serine, alpha-iso-propyl-DL-serine or alpha-benzyl-DL-serine. Cannot use D-alanine instead of L-alanine as the substrate for alpha-methyl-L-serine synthesis. Does not require tetrahydrofolate (THF) for activity. The protein is Alpha-methylserine aldolase of Variovorax paradoxus.